A 111-amino-acid polypeptide reads, in one-letter code: Large ribosomal subunit protein uL29 (111 aa).

A large ribosomal subunit protein uL29 region spans residues 1 to 85 (MTVAKELRQK…TKKTNEAAVN (85 aa)). The tract at residues 86 to 111 (AWKQHLEANKAKLLKSRAKREDASKK) is unknown.

This sequence belongs to the universal ribosomal protein uL29 family.

This chain is Large ribosomal subunit protein uL29, found in Mycoplasma pneumoniae (strain ATCC 29342 / M129 / Subtype 1) (Mycoplasmoides pneumoniae).